The chain runs to 315 residues: Transaldolase (315 aa).

Catalysis depends on Lys131, which acts as the Schiff-base intermediate with substrate.

The protein belongs to the transaldolase family. Type 1 subfamily. Homodimer.

The protein localises to the cytoplasm. It catalyses the reaction D-sedoheptulose 7-phosphate + D-glyceraldehyde 3-phosphate = D-erythrose 4-phosphate + beta-D-fructose 6-phosphate. Its pathway is carbohydrate degradation; pentose phosphate pathway; D-glyceraldehyde 3-phosphate and beta-D-fructose 6-phosphate from D-ribose 5-phosphate and D-xylulose 5-phosphate (non-oxidative stage): step 2/3. Functionally, transaldolase is important for the balance of metabolites in the pentose-phosphate pathway. The polypeptide is Transaldolase (Haemophilus ducreyi (strain 35000HP / ATCC 700724)).